We begin with the raw amino-acid sequence, 424 residues long: Glutamyl-tRNA reductase (424 aa).

Substrate is bound by residues 49 to 52 (TCNR), S105, 110 to 112 (EPQ), and Q116. C50 (nucleophile) is an active-site residue. An NADP(+)-binding site is contributed by 185–190 (GSGETA).

The protein belongs to the glutamyl-tRNA reductase family. In terms of assembly, homodimer.

The catalysed reaction is (S)-4-amino-5-oxopentanoate + tRNA(Glu) + NADP(+) = L-glutamyl-tRNA(Glu) + NADPH + H(+). The protein operates within porphyrin-containing compound metabolism; protoporphyrin-IX biosynthesis; 5-aminolevulinate from L-glutamyl-tRNA(Glu): step 1/2. In terms of biological role, catalyzes the NADPH-dependent reduction of glutamyl-tRNA(Glu) to glutamate 1-semialdehyde (GSA). The polypeptide is Glutamyl-tRNA reductase (Legionella pneumophila (strain Lens)).